We begin with the raw amino-acid sequence, 512 residues long: ATP synthase subunit alpha (512 aa).

An ATP-binding site is contributed by 169-176 (GDRQTGKT).

This sequence belongs to the ATPase alpha/beta chains family. In terms of assembly, F-type ATPases have 2 components, CF(1) - the catalytic core - and CF(0) - the membrane proton channel. CF(1) has five subunits: alpha(3), beta(3), gamma(1), delta(1), epsilon(1). CF(0) has four main subunits: a(1), b(1), b'(1) and c(9-12).

It is found in the cell inner membrane. It catalyses the reaction ATP + H2O + 4 H(+)(in) = ADP + phosphate + 5 H(+)(out). Produces ATP from ADP in the presence of a proton gradient across the membrane. The alpha chain is a regulatory subunit. This is ATP synthase subunit alpha from Jannaschia sp. (strain CCS1).